Consider the following 1162-residue polypeptide: MQDDLDGIVRHRRRSLSFLQIVTLTMAGLVAFDPAQVLAGHPTTDSELQTAGSPRPPGLEHCVDQEERRVARRLLYISTLDGRLSALDIAKSGKLRWSVPTGPGPLISSSIHRLELTNNGQFVRMIPSLSGGIYKFDGDSIDPIPITAEHLLSSSAKFSDDLVISGGKETRSYGVSVRTGQLLYECSLNGCVNSTEEGLAIDDTIREPDEEDQLEDGEQLRDEAGYIVRHDPLLDDVIIVRRQTQTVRAVESRTGVERWNFSVGQHELDLVRPSECQLQPRDELELAVLDVDIKVVVPEGIICAFSKSEPQTMLWKYKFDHPIVSAWNTNADDELQPIDLFSSAQWLWDQDENDTELPNAPQSPPSIYLGMYDKQLYIQESIRLRQEIMDQTKVYQQLTGDTSLMPRIPWKPISASSKSLVIFRKDQEDPEMIAEGAVAQGGELVPYDDENFAVAAQSVLNASEFVNGNGFYFYTTGDLNGPQECSTQNNPTDLPAITAPTSPTNATSEGTEATGNHSVNDDLGFSLDDIDAPVKVVILSLWFWWKEIVVIAFTSAVILNIFMGQRNQRVEREYLVIERHVPVQTAIEATEASTQALLGPVVPMQRPGNRFSFPPGQANQRTISESTTHSGEHYTSRFQSDFELMQCLGRGGFGVVFEAKNKLDENRYAIKRITLPNKESSRQRVLREARTLASCEHHNIVRYFHSWTETPPTGWQEEEDRKLLAHELSTSIQIETPDDSTMPSLTEQLKEKRQQQLLSWVSDAANSTACSHDFHLPGESSLKNIREEYDYDEEEDSLIEFRSESQSAALRAEEEDDTDDDYEEDEEQQGDHEKRHRSSVSIDIHSASFDLKNINYSQHQLVSNSFQIESVRPKSSGSDDANDDNKARRKPLTLALAQNHNNNQNGSQPTPSSATILNGTVAKPSKVYLYIQMQLCRKESLRDWLRDNRSETRAAHIGDIFHQIVDAVDYVHLKGLIHRDLKPSNIFFSQDGQIKIGDFGLVTDMADIPNLVAKCGDQSGLPSCARHTQQVGTHLYMSPEQLLGQHYDYKVDIYSLGLIFFELHVYFSTEMERIKTLRSLRDGQYPKDFAVNYPQQYDLLQQMLSAQPEQRPQTKQLKSQLRNILQLPHLLSEGQSEQAELAERARRLSRSRTFSSSSEPHQ.

A signal peptide spans 1 to 39 (MQDDLDGIVRHRRRSLSFLQIVTLTMAGLVAFDPAQVLA). At 40-537 (GHPTTDSELQ…DDIDAPVKVV (498 aa)) the chain is on the lumenal side. Residues Asn-193, Asn-260, Asn-353, Asn-461, Asn-505, and Asn-516 are each glycosylated (N-linked (GlcNAc...) asparagine). A disordered region spans residues 498–517 (TAPTSPTNATSEGTEATGNH). Over residues 499–517 (APTSPTNATSEGTEATGNH) the composition is skewed to polar residues. The chain crosses the membrane as a helical span at residues 538 to 558 (ILSLWFWWKEIVVIAFTSAVI). Topologically, residues 559–1162 (LNIFMGQRNQ…TFSSSSEPHQ (604 aa)) are cytoplasmic. At Ser-624 the chain carries Phosphoserine. One can recognise a Protein kinase domain in the interval 642–1130 (FELMQCLGRG…LRNILQLPHL (489 aa)). Residues 648–656 (LGRGGFGVV) and Lys-671 contribute to the ATP site. Ser-797 bears the Phosphoserine mark. Residues 801-839 (FRSESQSAALRAEEEDDTDDDYEEDEEQQGDHEKRHRSS) form a disordered region. Acidic residues predominate over residues 813–828 (EEEDDTDDDYEEDEEQ). Residue Thr-818 is modified to Phosphothreonine. Catalysis depends on Asp-980, which acts as the Proton acceptor. Phosphothreonine is present on Thr-1028. A disordered region spans residues 1135 to 1162 (QSEQAELAERARRLSRSRTFSSSSEPHQ). The span at 1151–1162 (SRTFSSSSEPHQ) shows a compositional bias: low complexity.

The protein belongs to the protein kinase superfamily. Ser/Thr protein kinase family. GCN2 subfamily. As to quaternary structure, forms dimers with HSPA5/BIP in resting cells. Oligomerizes in ER-stressed cells. In terms of processing, autophosphorylated. Post-translationally, N-glycosylated.

The protein resides in the endoplasmic reticulum membrane. The catalysed reaction is L-seryl-[protein] + ATP = O-phospho-L-seryl-[protein] + ADP + H(+). It catalyses the reaction L-threonyl-[protein] + ATP = O-phospho-L-threonyl-[protein] + ADP + H(+). Perturbation in protein folding in the endoplasmic reticulum (ER) promotes reversible dissociation from HSPA5/BIP and oligomerization, resulting in transautophosphorylation and kinase activity induction. Functionally, phosphorylates the alpha subunit of eukaryotic translation-initiation factor 2 (EIF2), leading to its inactivation and thus to a rapid reduction of translational initiation and repression of global protein synthesis. The polypeptide is Eukaryotic translation initiation factor 2-alpha kinase (PEK) (Drosophila melanogaster (Fruit fly)).